Reading from the N-terminus, the 326-residue chain is Tetraacyldisaccharide 4'-kinase (326 aa).

Residue 52–59 (TLGGAGKT) participates in ATP binding.

This sequence belongs to the LpxK family.

It carries out the reaction a lipid A disaccharide + ATP = a lipid IVA + ADP + H(+). It participates in glycolipid biosynthesis; lipid IV(A) biosynthesis; lipid IV(A) from (3R)-3-hydroxytetradecanoyl-[acyl-carrier-protein] and UDP-N-acetyl-alpha-D-glucosamine: step 6/6. In terms of biological role, transfers the gamma-phosphate of ATP to the 4'-position of a tetraacyldisaccharide 1-phosphate intermediate (termed DS-1-P) to form tetraacyldisaccharide 1,4'-bis-phosphate (lipid IVA). In Methylobacterium radiotolerans (strain ATCC 27329 / DSM 1819 / JCM 2831 / NBRC 15690 / NCIMB 10815 / 0-1), this protein is Tetraacyldisaccharide 4'-kinase.